The chain runs to 356 residues: Histidinol-phosphate aminotransferase (356 aa).

N6-(pyridoxal phosphate)lysine is present on Lys-211.

It belongs to the class-II pyridoxal-phosphate-dependent aminotransferase family. Histidinol-phosphate aminotransferase subfamily. Homodimer. Requires pyridoxal 5'-phosphate as cofactor.

It catalyses the reaction L-histidinol phosphate + 2-oxoglutarate = 3-(imidazol-4-yl)-2-oxopropyl phosphate + L-glutamate. The protein operates within amino-acid biosynthesis; L-histidine biosynthesis; L-histidine from 5-phospho-alpha-D-ribose 1-diphosphate: step 7/9. This is Histidinol-phosphate aminotransferase from Aeromonas hydrophila subsp. hydrophila (strain ATCC 7966 / DSM 30187 / BCRC 13018 / CCUG 14551 / JCM 1027 / KCTC 2358 / NCIMB 9240 / NCTC 8049).